We begin with the raw amino-acid sequence, 381 residues long: Periphilin-1 (381 aa).

3 stretches are compositionally biased toward basic and acidic residues: residues 1–28 (MWSE…DGYH), 39–65 (PLLD…GYSR), and 79–121 (RSFS…DGFR). Disordered regions lie at residues 1–65 (MWSE…GYSR) and 79–260 (RSFS…KSDE). Positions 117–123 (RDGFRRK) match the Nuclear localization signal motif. Residue lysine 123 forms a Glycyl lysine isopeptide (Lys-Gly) (interchain with G-Cter in SUMO2) linkage. 4 positions are modified to phosphoserine: serine 124, serine 128, serine 147, and serine 154. Residues 130 to 156 (YSRDRSPHKRDAPFFRESPVGRKDSPH) show a composition bias toward basic and acidic residues. Residues 157-168 (SRSGSSVSSRSY) show a composition bias toward low complexity. The span at 175-187 (THSFHQSQHRKSS) shows a compositional bias: basic residues. Phosphoserine is present on serine 181. Lysine 194 is covalently cross-linked (Glycyl lysine isopeptide (Lys-Gly) (interchain with G-Cter in SUMO2)). Residues 195 to 208 (RQNEAIRGRGKERS) are compositionally biased toward basic and acidic residues. A Phosphoserine modification is found at serine 211. Residue lysine 213 forms a Glycyl lysine isopeptide (Lys-Gly) (interchain with G-Cter in SUMO2) linkage. Phosphoserine is present on residues serine 215 and serine 219. The span at 217–230 (DASPSSSSAVASSK) shows a compositional bias: low complexity. Positions 231-260 (ALDKPSRLTEKELAEAESKWANETLEKSDE) are enriched in basic and acidic residues. Lysine 241 is covalently cross-linked (Glycyl lysine isopeptide (Lys-Gly) (interchain with G-Cter in SUMO2)). The residue at position 249 (lysine 249) is an N6-acetyllysine; alternate. Lysine 249 participates in a covalent cross-link: Glycyl lysine isopeptide (Lys-Gly) (interchain with G-Cter in SUMO2); alternate. The residue at position 339 (serine 339) is a Phosphoserine. Residue lysine 342 forms a Glycyl lysine isopeptide (Lys-Gly) (interchain with G-Cter in SUMO2) linkage.

As to quaternary structure, homodimer. Component of the HUSH complex; at least composed of TASOR, PPHLN1 and MPHOSPH8. Interacts with SIN3A and HDAC1. May interact with PPL. As to expression, ubiquitously expressed. Strong expression in the developing somites and limbs, the embryonic nervous system and the adult brain.

It localises to the nucleus. The protein localises to the cytoplasm. Its subcellular location is the chromosome. Its function is as follows. Component of the HUSH complex, a multiprotein complex that mediates epigenetic repression. The HUSH complex is recruited to genomic loci rich in H3K9me3 and is probably required to maintain transcriptional silencing by promoting recruitment of SETDB1, a histone methyltransferase that mediates further deposition of H3K9me3. In the HUSH complex, contributes to the maintenance of the complex at chromatin. Acts as a transcriptional corepressor and regulates the cell cycle, probably via the HUSH complex. The HUSH complex is also involved in the silencing of unintegrated retroviral DNA: some part of the retroviral DNA formed immediately after infection remains unintegrated in the host genome and is transcriptionally repressed. May be involved in epithelial differentiation by contributing to epidermal integrity and barrier formation. The chain is Periphilin-1 from Mus musculus (Mouse).